Reading from the N-terminus, the 479-residue chain is Ribulose bisphosphate carboxylase large chain (479 aa).

Residues 1-2 (MS) constitute a propeptide that is removed on maturation. Asn123 and Thr173 together coordinate substrate. The active-site Proton acceptor is Lys175. Lys177 is a substrate binding site. Residues Lys201, Asp203, and Glu204 each coordinate Mg(2+). At Lys201 the chain carries N6-carboxylysine. Position 208 is a phosphoserine (Ser208). Residue His294 is the Proton acceptor of the active site. The substrate site is built by Arg295 and His327. Thr330 is modified (phosphothreonine). Ser379 contributes to the substrate binding site.

This sequence belongs to the RuBisCO large chain family. Type I subfamily. Heterohexadecamer of 8 large chains and 8 small chains; disulfide-linked. The disulfide link is formed within the large subunit homodimers. Mg(2+) serves as cofactor. In terms of processing, the disulfide bond which can form in the large chain dimeric partners within the hexadecamer appears to be associated with oxidative stress and protein turnover.

It is found in the plastid. The protein localises to the chloroplast. It carries out the reaction 2 (2R)-3-phosphoglycerate + 2 H(+) = D-ribulose 1,5-bisphosphate + CO2 + H2O. The catalysed reaction is D-ribulose 1,5-bisphosphate + O2 = 2-phosphoglycolate + (2R)-3-phosphoglycerate + 2 H(+). Its function is as follows. RuBisCO catalyzes two reactions: the carboxylation of D-ribulose 1,5-bisphosphate, the primary event in carbon dioxide fixation, as well as the oxidative fragmentation of the pentose substrate in the photorespiration process. Both reactions occur simultaneously and in competition at the same active site. The protein is Ribulose bisphosphate carboxylase large chain of Barbarea verna (Land cress).